The primary structure comprises 145 residues: 3-dehydroquinate dehydratase (145 aa).

Tyr24 acts as the Proton acceptor in catalysis. The substrate site is built by Asn76, His82, and Asp89. The Proton donor role is filled by His102. Substrate-binding positions include 103–104 (LS) and Arg113.

The protein belongs to the type-II 3-dehydroquinase family. In terms of assembly, homododecamer.

The enzyme catalyses 3-dehydroquinate = 3-dehydroshikimate + H2O. Its pathway is metabolic intermediate biosynthesis; chorismate biosynthesis; chorismate from D-erythrose 4-phosphate and phosphoenolpyruvate: step 3/7. In terms of biological role, catalyzes a trans-dehydration via an enolate intermediate. This Nitrosomonas eutropha (strain DSM 101675 / C91 / Nm57) protein is 3-dehydroquinate dehydratase.